Here is a 409-residue protein sequence, read N- to C-terminus: Multifunctional CCA protein (409 aa).

Positions 8 and 11 each coordinate ATP. CTP contacts are provided by glycine 8 and arginine 11. The Mg(2+) site is built by aspartate 21 and aspartate 23. ATP-binding residues include arginine 91, arginine 137, and arginine 140. CTP is bound by residues arginine 91, arginine 137, and arginine 140. Residues 228 to 329 (TGVHTLSVLE…LELLQSFDVY (102 aa)) form the HD domain.

The protein belongs to the tRNA nucleotidyltransferase/poly(A) polymerase family. Bacterial CCA-adding enzyme type 1 subfamily. As to quaternary structure, monomer. Can also form homodimers and oligomers. Requires Mg(2+) as cofactor. Ni(2+) is required as a cofactor.

The catalysed reaction is a tRNA precursor + 2 CTP + ATP = a tRNA with a 3' CCA end + 3 diphosphate. It carries out the reaction a tRNA with a 3' CCA end + 2 CTP + ATP = a tRNA with a 3' CCACCA end + 3 diphosphate. In terms of biological role, catalyzes the addition and repair of the essential 3'-terminal CCA sequence in tRNAs without using a nucleic acid template. Adds these three nucleotides in the order of C, C, and A to the tRNA nucleotide-73, using CTP and ATP as substrates and producing inorganic pyrophosphate. tRNA 3'-terminal CCA addition is required both for tRNA processing and repair. Also involved in tRNA surveillance by mediating tandem CCA addition to generate a CCACCA at the 3' terminus of unstable tRNAs. While stable tRNAs receive only 3'-terminal CCA, unstable tRNAs are marked with CCACCA and rapidly degraded. The chain is Multifunctional CCA protein from Pseudomonas fluorescens (strain SBW25).